Here is a 277-residue protein sequence, read N- to C-terminus: Alpha carbonic anhydrase 3 (277 aa).

An N-terminal signal peptide occupies residues 1–19 (MKTIILFVTFLALSSSSLA). An Alpha-carbonic anhydrase domain is found at 24 to 259 (TEFHYKPGEI…LNGRLVYLNE (236 aa)). Cysteine 49 and cysteine 209 form a disulfide bridge. N-linked (GlcNAc...) asparagine glycosylation is found at asparagine 70 and asparagine 107. 3 residues coordinate Zn(2+): histidine 117, histidine 119, and histidine 136. 205-206 (TT) is a substrate binding site. A disordered region spans residues 257–277 (LNEQSSPSPTPRLRIPRVGPV).

It belongs to the alpha-class carbonic anhydrase family. The cofactor is Zn(2+). In terms of processing, N-glycosylated. Expressed in flowers and siliques.

Its subcellular location is the plastid. It localises to the chloroplast stroma. The catalysed reaction is hydrogencarbonate + H(+) = CO2 + H2O. Reversible hydration of carbon dioxide. This chain is Alpha carbonic anhydrase 3 (ACA3), found in Arabidopsis thaliana (Mouse-ear cress).